Consider the following 428-residue polypeptide: MSNIVIVGAQWGDEGKGKIADTLAEKADLVVRYQGGNNAGHTLVVNGKKTFLHLIPSGVLHQHTKCVIGHGVVLDPVALDEEITRLQATGIAISAENLFVSESCTIITSYHKLLDAVRESNTSEKIGTTGKGIGPAYEDKVSRKGIKFKHLFDKDVLRSRLAISLAEKETLFRDLYKVEYPTLEQEFDKLFALGQKLKQYAADTFSIIDQAIAAGKNVVYEGAQGVLLDVDYGTYPFVTSSNTSVAGVYSGATTAGHGLDHVIGITKAYTTRVGEGPFPTELFDDVGKFIQHKGGEIGVTTGRIRRCGWLDLPLLKYSAKCSNLTSIALTKVDVLSDMDTLKVCIGYKYEGREIYCAYPGIDLYKVEPILVEMEPFSINETVTKDNIPAALKTYLKTIENHVGIPISSLAYGPSREQILFFEDYFKKG.

GTP contacts are provided by residues 12 to 18 and 40 to 42; these read GDEGKGK and GHT. The active-site Proton acceptor is Asp13. Asp13 and Gly40 together coordinate Mg(2+). IMP-binding positions include 13–16, 38–41, Thr129, Arg143, Gln224, Thr239, and Arg303; these read DEGK and NAGH. The active-site Proton donor is His41. 299-305 contributes to the substrate binding site; it reads VTTGRIR. GTP-binding positions include Arg305, 331–333, and 410–412; these read KVD and AYG.

Belongs to the adenylosuccinate synthetase family. Homodimer. It depends on Mg(2+) as a cofactor.

The protein resides in the cytoplasm. It carries out the reaction IMP + L-aspartate + GTP = N(6)-(1,2-dicarboxyethyl)-AMP + GDP + phosphate + 2 H(+). The protein operates within purine metabolism; AMP biosynthesis via de novo pathway; AMP from IMP: step 1/2. Functionally, plays an important role in the de novo pathway of purine nucleotide biosynthesis. Catalyzes the first committed step in the biosynthesis of AMP from IMP. This is Adenylosuccinate synthetase from Francisella tularensis subsp. novicida (strain U112).